The following is a 388-amino-acid chain: Chorismate synthase (388 aa).

Residues arginine 39 and arginine 45 each coordinate NADP(+). FMN is bound by residues 132–134 (RSS), 251–252 (NA), glycine 296, 311–315 (KPIPT), and arginine 337.

Belongs to the chorismate synthase family. In terms of assembly, homotetramer. It depends on FMNH2 as a cofactor.

It carries out the reaction 5-O-(1-carboxyvinyl)-3-phosphoshikimate = chorismate + phosphate. It functions in the pathway metabolic intermediate biosynthesis; chorismate biosynthesis; chorismate from D-erythrose 4-phosphate and phosphoenolpyruvate: step 7/7. Functionally, catalyzes the anti-1,4-elimination of the C-3 phosphate and the C-6 proR hydrogen from 5-enolpyruvylshikimate-3-phosphate (EPSP) to yield chorismate, which is the branch point compound that serves as the starting substrate for the three terminal pathways of aromatic amino acid biosynthesis. This reaction introduces a second double bond into the aromatic ring system. The protein is Chorismate synthase of Staphylococcus aureus (strain COL).